A 466-amino-acid polypeptide reads, in one-letter code: Coagulation factor VII (466 aa).

An N-terminal signal peptide occupies residues 1 to 20 (MVSQALRLLCLLLGLQGCLA). Positions 21 to 60 (AGGVAEASGGETRDMPWKPGPHRVFITQEEAHGVLHRRRR) are excised as a propeptide. One can recognise a Gla domain in the interval 61 to 105 (ANAFLEELRPGSLERECKEEQCSFEEAREIFKDLERTKLFWISYS). 4-carboxyglutamate occurs at positions 66, 67, 74, 76, 79, 80, 85, 86, 89, and 95. An intrachain disulfide couples Cys-77 to Cys-82. The region spanning 106-142 (DGDQCASSPCQNGGSCKDQLQSYICFCLPAFEGRNCE) is the EGF-like 1; calcium-binding domain. Intrachain disulfides connect Cys-110–Cys-121, Cys-115–Cys-130, Cys-132–Cys-141, Cys-151–Cys-162, Cys-158–Cys-172, Cys-174–Cys-187, Cys-195–Cys-322, Cys-219–Cys-224, Cys-238–Cys-254, and Cys-370–Cys-389. O-linked (Glc...) serine; alternate glycosylation occurs at Ser-112. The O-linked (Xyl...) serine; alternate glycan is linked to Ser-112. Ser-120 carries O-linked (Fuc) serine glycosylation. (3R)-3-hydroxyaspartate is present on Asp-123. Residues 147–188 (DQLICVNENGGCEQYCSDHTGTKRSCRCHEGYSLLADGVSCT) form the EGF-like 2 domain. Asn-205 is a glycosylation site (N-linked (GlcNAc...) asparagine). The Peptidase S1 domain occupies 213–452 (IVGGKVCPKG…YIEWLQKLMR (240 aa)). Catalysis depends on charge relay system residues His-253 and Asp-302. Asn-382 is a glycosylation site (N-linked (GlcNAc...) asparagine). Residue Asp-398 coordinates substrate. The cysteines at positions 400 and 428 are disulfide-linked. Ser-404 functions as the Charge relay system in the catalytic mechanism.

It belongs to the peptidase S1 family. As to quaternary structure, heterodimer of a light chain and a heavy chain linked by a disulfide bond. Post-translationally, the vitamin K-dependent, enzymatic carboxylation of some glutamate residues allows the modified protein to bind calcium. The iron and 2-oxoglutarate dependent 3-hydroxylation of aspartate and asparagine is (R) stereospecific within EGF domains. In terms of processing, O-glycosylated. O-fucosylated by POFUT1 on a conserved serine or threonine residue found in the consensus sequence C2-X(4,5)-[S/T]-C3 of EGF domains, where C2 and C3 are the second and third conserved cysteines. Post-translationally, can be either O-glucosylated or O-xylosylated at Ser-112 by POGLUT1.

The protein localises to the secreted. The enzyme catalyses Selective cleavage of Arg-|-Ile bond in factor X to form factor Xa.. In terms of biological role, initiates the extrinsic pathway of blood coagulation. Serine protease that circulates in the blood in a zymogen form. Factor VII is converted to factor VIIa by factor Xa, factor XIIa, factor IXa, or thrombin by minor proteolysis. In the presence of tissue factor and calcium ions, factor VIIa then converts factor X to factor Xa by limited proteolysis. Factor VIIa also converts factor IX to factor IXa in the presence of tissue factor and calcium. This is Coagulation factor VII (F7) from Pan paniscus (Pygmy chimpanzee).